A 651-amino-acid chain; its full sequence is Probable ATP-dependent helicase MJ0942 (651 aa).

The region spanning 6–255 is the Helicase ATP-binding domain; the sequence is YIKEKFPYPK…EIIEKYLTSR (250 aa). An ATP-binding site is contributed by 41–48; the sequence is APTGVGKT. 3 residues coordinate [4Fe-4S] cluster: cysteine 102, cysteine 149, and cysteine 154. A DEAH box motif is present at residues 195-198; it reads DEAH. A Helicase C-terminal domain is found at 449–638; that stretch reads NLLKILEAIN…NYEVMSLDMA (190 aa).

Belongs to the helicase family. DinG subfamily. Requires [4Fe-4S] cluster as cofactor.

It carries out the reaction Couples ATP hydrolysis with the unwinding of duplex DNA at the replication fork by translocating in the 5'-3' direction. This creates two antiparallel DNA single strands (ssDNA). The leading ssDNA polymer is the template for DNA polymerase III holoenzyme which synthesizes a continuous strand.. The enzyme catalyses ATP + H2O = ADP + phosphate + H(+). Might be a 5'-3' DNA helicase. This chain is Probable ATP-dependent helicase MJ0942, found in Methanocaldococcus jannaschii (strain ATCC 43067 / DSM 2661 / JAL-1 / JCM 10045 / NBRC 100440) (Methanococcus jannaschii).